Here is a 216-residue protein sequence, read N- to C-terminus: MTLSVYHYIENTWNSEEWKKGVLRQRFIEWRKEPSIVRLAKPTRLNRARSLGYKAKQGFVIVRVRVRRGGLNKPRPNKGRRPKRMGVYGYGPAKGYKWIAEERAARKYPNLEVLGSYYVGEDGLYKYYEIIMVDPSHPVIKNDPNYKWLQDPSNRNRVFRGLTSAGKKARGLRKSKGFKGTVKHKWSRKQKEREEKKRHEASKYYRLQRYDKIPGK.

The span at 170–188 shows a compositional bias: basic residues; it reads RGLRKSKGFKGTVKHKWSR. Residues 170 to 201 are disordered; sequence RGLRKSKGFKGTVKHKWSRKQKEREEKKRHEA. Positions 189–201 are enriched in basic and acidic residues; the sequence is KQKEREEKKRHEA.

Belongs to the eukaryotic ribosomal protein eL15 family.

In Saccharolobus islandicus (strain M.16.27) (Sulfolobus islandicus), this protein is Large ribosomal subunit protein eL15.